The following is a 188-amino-acid chain: Selenoprotein S B (188 aa).

The helical transmembrane segment at Glu-29–Ile-49 threads the bilayer. Basic and acidic residues predominate over residues Thr-116 to Ser-125. The interval Thr-116 to Gly-188 is disordered. The span at Ala-136 to Pro-147 shows a compositional bias: low complexity. Position 187 (Sec-187) is a non-standard amino acid, selenocysteine.

The protein belongs to the selenoprotein S family.

The protein resides in the endoplasmic reticulum membrane. It localises to the cytoplasm. Involved in the degradation process of misfolded endoplasmic reticulum (ER) luminal proteins. Participates in the transfer of misfolded proteins from the ER to the cytosol, where they are destroyed by the proteasome in a ubiquitin-dependent manner. The sequence is that of Selenoprotein S B (vimp-b) from Xenopus laevis (African clawed frog).